Here is a 536-residue protein sequence, read N- to C-terminus: Zinc finger protein 394 (536 aa).

The disordered stretch occupies residues 18-45 (AVKVEEDSPGSQEPSGSGDWQNPETSRK). K20 is covalently cross-linked (Glycyl lysine isopeptide (Lys-Gly) (interchain with G-Cter in SUMO2)). A compositionally biased stretch (polar residues) spans 26–41 (PGSQEPSGSGDWQNPE). Residues 44–126 (RKQFRQLRYQ…ALARTLQRAL (83 aa)) form the SCAN box domain. The KRAB domain occupies 135 to 196 (ATFKDVAESL…KQEMSKEAES (62 aa)). Residues K207 and K260 each participate in a glycyl lysine isopeptide (Lys-Gly) (interchain with G-Cter in SUMO2) cross-link. C2H2-type zinc fingers lie at residues 328–350 (YKCDNCEKRFRQRSDLFKHQRTH), 356–378 (YQCQECGKSFSQSAALVKHQRTH), and 384–406 (YACPECGECFRQSSHLSRHQRTH). A C2H2-type 4; atypical zinc finger spans residues 412–433 (CKCEECGEIFHISSLFKHQRLH). K413 participates in a covalent cross-link: Glycyl lysine isopeptide (Lys-Gly) (interchain with G-Cter in SUMO2). C2H2-type zinc fingers lie at residues 439-461 (HKCEVCEKSFKQRSDLFKHQRIH), 467-489 (YMCFVCERRFSQSATLIKHQRTH), and 495-517 (YKCFQCGERFRQSTHLVRHQRIH).

Belongs to the krueppel C2H2-type zinc-finger protein family.

Its subcellular location is the nucleus. In terms of biological role, may be involved in transcriptional regulation. The protein is Zinc finger protein 394 (Znf394) of Rattus norvegicus (Rat).